We begin with the raw amino-acid sequence, 522 residues long: MAPVAAATGWRLLLVLSAAGLGAAGAPQPPNILLLLMDDMGWGDLGIYGEPSRETPNLDRMAAEGMLFPSFYSANPLCSPSRAALLTGRLPIRNGFYTTNRHARNAYTPQEIVGGIPDQEHVLPELLKEAGYVSKIVGKWHLGHRPQFHPLKHGFDEWFGSPNCHFGPYDNRARPNIPVYRDWEMVGRYYEEFPINLKTGEANLTQVYLQEALDFIKRQQAAQRPFFLYWAIDATHAPVYASRPFLGTSQRGRYGDAVREIDNSVGKILSLLQDLRISENTFVFFTSDNGAALISAPNQGGSNGPFLCGKQTTFEGGMREPAIAWWPGRIPAGRVSHQLGSIMDLFTTSLSLAGLAPPSDRVIDGLDLLPAMLGGQLTDRPIFYYRGDTLMAVTLGQYKAHFWTWTNSWEEFRQGIDFCPGQNVSGVTTHTQEEHTKLPLIFHLGRDPGERFPLSFASTEYLDVLQRVTPVVQQHQKTLVPGQPQLNVCDRAVMNWAPPGCEKLGKCLTPPESTPKKCSWPH.

A signal peptide spans 1 to 25 (MAPVAAATGWRLLLVLSAAGLGAAG). The catalytic domain stretch occupies residues 27 to 379 (PQPPNILLLL…PAMLGGQLTD (353 aa)). Ca(2+)-binding residues include aspartate 38, aspartate 39, and cysteine 78. The active-site Nucleophile is cysteine 78. Cysteine 78 carries the 3-oxoalanine (Cys) modification. Histidine 141 is a catalytic residue. An N-linked (GlcNAc...) asparagine glycan is attached at asparagine 203. Ca(2+) contacts are provided by aspartate 288 and asparagine 289. A disulfide bridge connects residues cysteine 308 and cysteine 419. N-linked (GlcNAc...) asparagine glycosylation occurs at asparagine 423. 2 disulfide bridges follow: cysteine 489/cysteine 518 and cysteine 501/cysteine 507.

Belongs to the sulfatase family. As to quaternary structure, homodimer. Requires Ca(2+) as cofactor. Post-translationally, the conversion to 3-oxoalanine (also known as C-formylglycine, FGly), of a serine or cysteine residue in prokaryotes and of a cysteine residue in eukaryotes, is critical for catalytic activity.

It is found in the lysosome. It catalyses the reaction Hydrolysis of the 6-sulfate groups of the N-acetyl-D-galactosamine 6-sulfate units of chondroitin sulfate and of the D-galactose 6-sulfate units of keratan sulfate.. This chain is N-acetylgalactosamine-6-sulfatase (GALNS), found in Canis lupus familiaris (Dog).